Consider the following 739-residue polypeptide: UPF0313 protein YgiQ (739 aa).

The Radical SAM core domain maps to 372 to 650 (AYEMIRFSVN…KALLRYHDPA (279 aa)). Positions 386, 390, and 393 each coordinate [4Fe-4S] cluster. A disordered region spans residues 685 to 739 (REARRQNRNTRPALTKHTPMATQRQTPATAKKASSTQSRPVNAGAKKRPKAAVGR). Polar residues predominate over residues 704 to 724 (MATQRQTPATAKKASSTQSRP). Positions 729 to 739 (AKKRPKAAVGR) are enriched in basic residues.

It belongs to the UPF0313 family. [4Fe-4S] cluster serves as cofactor.

This chain is UPF0313 protein YgiQ (ygiQ), found in Escherichia coli (strain K12).